Consider the following 117-residue polypeptide: Large ribosomal subunit protein bL20 (117 aa).

Belongs to the bacterial ribosomal protein bL20 family.

Its function is as follows. Binds directly to 23S ribosomal RNA and is necessary for the in vitro assembly process of the 50S ribosomal subunit. It is not involved in the protein synthesizing functions of that subunit. This Geotalea daltonii (strain DSM 22248 / JCM 15807 / FRC-32) (Geobacter daltonii) protein is Large ribosomal subunit protein bL20.